A 428-amino-acid chain; its full sequence is Glutamine synthetase, chloroplastic (428 aa).

The N-terminal 48 residues, 1–48 (MAQAVVPAMQCQVGAVRARPAAAAAAAGGRVWGVRRTGRGTSGFRVMA), are a transit peptide targeting the chloroplast. The region spanning 75–155 (IIAEYIWVGG…VMCDTYTPAG (81 aa)) is the GS beta-grasp domain. The disordered stretch occupies residues 95–120 (TISKPVEDPSELPKWNYDGSSTGQAP). One can recognise a GS catalytic domain in the interval 159–428 (PTNKRNRAAQ…LAAKKLALKV (270 aa)).

This sequence belongs to the glutamine synthetase family. As to quaternary structure, homooctamer.

The protein resides in the plastid. Its subcellular location is the chloroplast. It catalyses the reaction L-glutamate + NH4(+) + ATP = L-glutamine + ADP + phosphate + H(+). Functionally, light-modulated chloroplastic glutamine synthetase, encoded by a nuclear gene and expressed primarily in leaves, and which is responsible for the reassimilation of the ammonia generated by photorespiration. The chain is Glutamine synthetase, chloroplastic from Oryza sativa subsp. japonica (Rice).